Consider the following 818-residue polypeptide: Serine/threonine-protein phosphatase 4 regulatory subunit 3 (818 aa).

In terms of domain architecture, WH1 spans 1–100 (MTDTRRRVKV…DEIWEKICQV (100 aa)). A compositionally biased stretch (acidic residues) spans 670 to 681 (FNTDEEDLEDGE). Residues 670–818 (FNTDEEDLED…PLSKKSKLSS (149 aa)) are disordered. The segment covering 703-718 (FMERKKLKDSEEKEVL) has biased composition (basic and acidic residues). Residues 729 to 775 (SPSFKLSFSSSPKASLSSPPTASLHPGSPGSPSSPGTGARSSPPSAA) show a composition bias toward low complexity. Residues S769 and S770 each carry the phosphoserine modification. Positions 788-803 (YPDDDEEDEDEEDADS) are enriched in acidic residues.

It belongs to the SMEK family. As to quaternary structure, serine/threonine-protein phosphatase 4 (PP4) occurs in different assemblies of the catalytic and one or more regulatory subunits.

In terms of biological role, regulatory subunit of serine/threonine-protein phosphatase 4. The protein is Serine/threonine-protein phosphatase 4 regulatory subunit 3 (smek1) of Danio rerio (Zebrafish).